Reading from the N-terminus, the 87-residue chain is uncharacterized protein (87 aa).

A helical membrane pass occupies residues 48–70 (GIYIPHTLIFWMCPRAMGTAITF).

It is found in the host membrane. This is an uncharacterized protein from Gallid herpesvirus 2 (strain Chicken/Md5/ATCC VR-987) (GaHV-2).